The primary structure comprises 77 residues: Secapin-2 (77 aa).

The first 32 residues, 1–32 (MKNYSKNATYLITVLLFSFVTMLLIIPSKCEA), serve as a signal peptide directing secretion. A propeptide spanning residues 33–52 (VSNDMQPLEARTADLVQQPR) is cleaved from the precursor. A disulfide bond links Cys61 and Cys72. Pro77 bears the Proline amide mark.

The protein belongs to the secapin family. In terms of tissue distribution, expressed by the venom gland.

It localises to the secreted. Functionally, serine protease inhibitor which exhibits antifibrinolytic, antielastolytic and antimicrobial activities. Displays antimicrobial activity against bacteria and fungi. Likely functions in the innate immune response to microbial infection and possibly in the venom, as an antifibrinolytic agent. Induces hyperalgesia and edema mediated by leukotrienes when injected into mice. Does not induce hemolytic activity, mast cell degranulation, or chemotactic activity for polymorphonucleated leukocytes (PMNL). The sequence is that of Secapin-2 from Apis mellifera (Honeybee).